Reading from the N-terminus, the 370-residue chain is NAD-dependent histone deacetylase HST4 (370 aa).

Residues 1-27 (MKQKFVLPITPPSTAEKKPQTENRCNE) are disordered. Over residues 15–27 (AEKKPQTENRCNE) the composition is skewed to basic and acidic residues. In terms of domain architecture, Deacetylase sirtuin-type spans 75-370 (RHHMDRDAGF…GDCQHVTSLL (296 aa)). Residues 100–119 (GAGISVAAGIPDFRSSEGIF) and 184–187 (QNID) contribute to the NAD(+) site. The active-site Proton acceptor is His-213. Cys-221, Cys-224, Cys-251, and Cys-254 together coordinate Zn(2+). Residues 310–312 (GTS), 340–342 (NTS), and Cys-363 each bind NAD(+).

Belongs to the sirtuin family. Class I subfamily. Zn(2+) serves as cofactor.

It localises to the nucleus. The catalysed reaction is N(6)-acetyl-L-lysyl-[protein] + NAD(+) + H2O = 2''-O-acetyl-ADP-D-ribose + nicotinamide + L-lysyl-[protein]. Its function is as follows. NAD-dependent histone deacetylase, which contributes together with HST3 to histone H3 'Lys-56' deacetylation, regulation of telomeric silencing, proper cell cycle progression, DNA damage control, DNA recombination, and genomic maintenance. This Saccharomyces cerevisiae (strain ATCC 204508 / S288c) (Baker's yeast) protein is NAD-dependent histone deacetylase HST4 (HST4).